A 675-amino-acid chain; its full sequence is L-type lectin-domain containing receptor kinase IV.1 (675 aa).

Residues 1-22 (MFLKLLTIFFFFFFNLIFQSSS) form the signal peptide. The Extracellular segment spans residues 23 to 291 (QSLNFAYNNG…EPKRISEFYK (269 aa)). Residues 25 to 261 (LNFAYNNGFN…SEHYILGWSF (237 aa)) are legume-lectin like. N-linked (GlcNAc...) asparagine glycans are attached at residues Asn-57, Asn-79, Asn-112, Asn-134, Asn-153, and Asn-186. The chain crosses the membrane as a helical span at residues 292-312 (IGMPLISLFLIFSFIFLVCYI). Over 313-675 (VRRRRKFAEE…IADSQLSGGR (363 aa)) the chain is Cytoplasmic. Residues 347 to 624 (FKEKGLLGTG…LHYLRGDAKL (278 aa)) form the Protein kinase domain. Residues 353 to 361 (LGTGGFGSV) and Lys-376 contribute to the ATP site. Asp-472 acts as the Proton acceptor in catalysis.

In the C-terminal section; belongs to the protein kinase superfamily. Ser/Thr protein kinase family. It in the N-terminal section; belongs to the leguminous lectin family.

Its subcellular location is the membrane. The enzyme catalyses L-seryl-[protein] + ATP = O-phospho-L-seryl-[protein] + ADP + H(+). The catalysed reaction is L-threonyl-[protein] + ATP = O-phospho-L-threonyl-[protein] + ADP + H(+). This Arabidopsis thaliana (Mouse-ear cress) protein is L-type lectin-domain containing receptor kinase IV.1 (LECRK41).